Reading from the N-terminus, the 374-residue chain is Coiled-coil domain-containing protein 89 (374 aa).

The tract at residues 1–40 is disordered; the sequence is MRAPMLQKQQAPRMDTPPPEERLEKQNEKLNNQEEETEFK. Thr16 bears the Phosphothreonine mark. Residues 19 to 32 are compositionally biased toward basic and acidic residues; the sequence is PEERLEKQNEKLNN. Residues 20–351 adopt a coiled-coil conformation; the sequence is EERLEKQNEK…DELRLQSEAF (332 aa).

The protein belongs to the CCDC89 family. In terms of assembly, interacts with HEY1.

Its subcellular location is the cytoplasm. The protein localises to the nucleus. The protein is Coiled-coil domain-containing protein 89 (CCDC89) of Homo sapiens (Human).